The chain runs to 201 residues: Large ribosomal subunit protein uL4 (201 aa).

Residues 42 to 67 (GNSAQKTRSEVSGGGKKPWNQKGTGR) form a disordered region.

The protein belongs to the universal ribosomal protein uL4 family. In terms of assembly, part of the 50S ribosomal subunit.

Functionally, one of the primary rRNA binding proteins, this protein initially binds near the 5'-end of the 23S rRNA. It is important during the early stages of 50S assembly. It makes multiple contacts with different domains of the 23S rRNA in the assembled 50S subunit and ribosome. In terms of biological role, forms part of the polypeptide exit tunnel. This Legionella pneumophila (strain Lens) protein is Large ribosomal subunit protein uL4.